Here is a 629-residue protein sequence, read N- to C-terminus: Hemocyanin G chain (629 aa).

Residues H171, H175, H202, H322, H326, and H362 each contribute to the Cu cation site. 2 N-linked (GlcNAc...) asparagine glycosylation sites follow: N447 and N506. A disulfide bond links C534 and C582. A glycan (N-linked (GlcNAc...) asparagine) is linked at N615.

This sequence belongs to the tyrosinase family. Hemocyanin subfamily. Tarantula hemocyanin is a 24-chain polymer with seven different chains identified. In terms of tissue distribution, hemolymph.

The protein resides in the secreted. The protein localises to the extracellular space. In terms of biological role, hemocyanins are copper-containing oxygen carriers occurring freely dissolved in the hemolymph of many mollusks and arthropods. This chain is Hemocyanin G chain (HCG), found in Aphonopelma sp. (American tarantula).